The following is a 181-amino-acid chain: Probable pyruvoyl-dependent arginine decarboxylase (181 aa).

Ser43 is modified (pyruvic acid (Ser)).

It belongs to the PdaD family. Requires pyruvate as cofactor.

The catalysed reaction is L-arginine + H(+) = agmatine + CO2. The chain is Probable pyruvoyl-dependent arginine decarboxylase from Prosthecochloris aestuarii (strain DSM 271 / SK 413).